The sequence spans 466 residues: Alpha-1A adrenergic receptor (466 aa).

The Extracellular portion of the chain corresponds to 1–27 (MVFLSGNASDSSNCTHPPPPVNISKAI). 3 N-linked (GlcNAc...) asparagine glycosylation sites follow: Asn-7, Asn-13, and Asn-22. The helical transmembrane segment at 28–51 (LLGVILGGLILFGVLGNILVILSV) threads the bilayer. Residues 52–64 (ACHRHLHSVTHYY) are Cytoplasmic-facing. The chain crosses the membrane as a helical span at residues 65 to 88 (IVNLAVADLLLTSTVLPFSAIFEI). Residues 89–99 (LGYWAFGRVFC) are Extracellular-facing. Cysteines 99 and 176 form a disulfide. Residues 100 to 122 (NVWAAVDVLCCTASIMGLCIISI) form a helical membrane-spanning segment. Residues 123–143 (DRYIGVSYPLRYPTIVTQKRG) are Cytoplasmic-facing. Residues 144-167 (LMALLCVWALSLVISIGPLFGWRQ) form a helical membrane-spanning segment. The Extracellular segment spans residues 168 to 181 (PAPEDETICQINEE). Residues 182–205 (PGYVLFSALGSFYVPLTIILVMYC) traverse the membrane as a helical segment. The Cytoplasmic portion of the chain corresponds to 206–273 (RVYVVAKRES…FSREKKAAKT (68 aa)). Ser-215 is subject to Phosphoserine; by PKA. Residues 274 to 297 (LGIVVGCFVLCWLPFFLVMPIGSF) traverse the membrane as a helical segment. The Extracellular portion of the chain corresponds to 298–305 (FPDFRPSE). Residues 306-329 (TVFKIAFWLGYLNSCINPIIYPCS) traverse the membrane as a helical segment. Over 330–466 (SQEFKKAFQN…ISLSENGEEV (137 aa)) the chain is Cytoplasmic. The Nuclear localization signal signature appears at 334 to 349 (KKAFQNVLRIQCLRRK). Cys-345 is lipidated: S-palmitoyl cysteine.

Belongs to the G-protein coupled receptor 1 family. Adrenergic receptor subfamily. ADRA1A sub-subfamily. As to quaternary structure, homo- and heterooligomer. Heterooligomerizes with ADRA1B homooligomers in cardiac myocytes. Interacts with CAVIN4.

It localises to the nucleus membrane. Its subcellular location is the cell membrane. The protein localises to the cytoplasm. It is found in the membrane. The protein resides in the caveola. This alpha-adrenergic receptor mediates its action by association with G proteins that activate a phosphatidylinositol-calcium second messenger system. Its effect is mediated by G(q) and G(11) proteins. Nuclear ADRA1A-ADRA1B heterooligomers regulate phenylephrine (PE)-stimulated ERK signaling in cardiac myocytes. The chain is Alpha-1A adrenergic receptor (ADRA1A) from Bos taurus (Bovine).